Consider the following 950-residue polypeptide: Glycine dehydrogenase (decarboxylating) (950 aa).

K698 is subject to N6-(pyridoxal phosphate)lysine.

Belongs to the GcvP family. As to quaternary structure, the glycine cleavage system is composed of four proteins: P, T, L and H. The cofactor is pyridoxal 5'-phosphate.

It catalyses the reaction N(6)-[(R)-lipoyl]-L-lysyl-[glycine-cleavage complex H protein] + glycine + H(+) = N(6)-[(R)-S(8)-aminomethyldihydrolipoyl]-L-lysyl-[glycine-cleavage complex H protein] + CO2. In terms of biological role, the glycine cleavage system catalyzes the degradation of glycine. The P protein binds the alpha-amino group of glycine through its pyridoxal phosphate cofactor; CO(2) is released and the remaining methylamine moiety is then transferred to the lipoamide cofactor of the H protein. The protein is Glycine dehydrogenase (decarboxylating) of Neisseria gonorrhoeae (strain NCCP11945).